The primary structure comprises 620 residues: Mitochondrial Rho GTPase 2 (620 aa).

Topologically, residues 1–594 (MRRDVRILLL…ELHPTSFWLR (594 aa)) are cytoplasmic. Positions 2–168 (RRDVRILLLG…FYYAQKAVLH (167 aa)) constitute a Miro 1 domain. Residues Gly-16, Lys-17, Thr-18, and Ser-19 each coordinate GTP. Thr-18 is a Mg(2+) binding site. Asp-57 is a binding site for Mg(2+). GTP is bound at residue Ser-59. Residue Lys-96 forms a Glycyl lysine isopeptide (Lys-Gly) (interchain with G-Cter in ubiquitin) linkage. Asn-118, Lys-119, Asp-121, Ala-149, and Lys-150 together coordinate GTP. Lys-119 participates in a covalent cross-link: Glycyl lysine isopeptide (Lys-Gly) (interchain with G-Cter in ubiquitin). Residue Lys-164 forms a Glycyl lysine isopeptide (Lys-Gly) (interchain with G-Cter in ubiquitin) linkage. EF-hand domains lie at 184 to 219 (ACAQ…CFGH) and 304 to 339 (RGYQ…FSGA). Ca(2+)-binding residues include Asp-197, Asp-199, Asp-201, Glu-208, Asp-317, Asp-319, Asp-321, and Glu-328. One can recognise a Miro 2 domain in the interval 415–578 (RSVLMCKVLG…FTQLATMATF (164 aa)). Residues Gly-427, Gly-429, Lys-430, Ser-431, and Ala-432 each coordinate GTP. Ser-431 contributes to the Mg(2+) binding site. Glu-473 is a binding site for Mg(2+). GTP is bound by residues Lys-527, Asp-529, and Cys-558. A helical; Anchor for type IV membrane protein membrane pass occupies residues 595-617 (GVLVAVGTAVAAVLSFSLYRVLV). Over 618–620 (KSR) the chain is Mitochondrial intermembrane.

It belongs to the mitochondrial Rho GTPase family. Homodimer. Interacts with the kinesin-binding proteins TRAK1/OIP106 and TRAK2/GRIF1, forming a link between mitochondria and the trafficking apparatus of the microtubules. Interacts with ARMCX3. Found in a complex with KIF5B, OGT, RHOT1 and TRAK1. Ubiquitinated by PRKN in a PINK1-dependent manner, leading to its degradation. As to expression, ubiquitously expressed.

The protein resides in the mitochondrion outer membrane. The enzyme catalyses GTP + H2O = GDP + phosphate + H(+). It catalyses the reaction ATP + H2O = ADP + phosphate + H(+). It carries out the reaction UTP + H2O = UDP + phosphate + H(+). Atypical mitochondrial nucleoside-triphosphatase (NTPase) involved in mitochondrial trafficking. Probably involved in control of anterograde transport of mitochondria and their subcellular distribution. Can hydrolyze GTP, ATP and UTP. The protein is Mitochondrial Rho GTPase 2 (Rhot2) of Mus musculus (Mouse).